The sequence spans 450 residues: Chromosomal replication initiator protein DnaA (450 aa).

The segment at 1-79 (MKDSYFDLNT…MEYAYDVAHD (79 aa)) is domain I, interacts with DnaA modulators. The segment at 79-112 (DFFKPELKVIKVVANPVNNQKSNQSNSDFVATDY) is domain II. The segment at 113–329 (QLNQNFTFDT…GAFNTLTLMA (217 aa)) is domain III, AAA+ region. 4 residues coordinate ATP: G157, G159, K160, and T161. The segment at 330–450 (RAGRPINVSN…NLSTKIKEKS (121 aa)) is domain IV, binds dsDNA.

This sequence belongs to the DnaA family. Oligomerizes as a right-handed, spiral filament on DNA at oriC.

The protein resides in the cytoplasm. Functionally, plays an essential role in the initiation and regulation of chromosomal replication. ATP-DnaA binds to the origin of replication (oriC) to initiate formation of the DNA replication initiation complex once per cell cycle. Binds the DnaA box (a 9 base pair repeat at the origin) and separates the double-stranded (ds)DNA. Forms a right-handed helical filament on oriC DNA; dsDNA binds to the exterior of the filament while single-stranded (ss)DNA is stabiized in the filament's interior. The ATP-DnaA-oriC complex binds and stabilizes one strand of the AT-rich DNA unwinding element (DUE), permitting loading of DNA polymerase. After initiation quickly degrades to an ADP-DnaA complex that is not apt for DNA replication. Binds acidic phospholipids. This chain is Chromosomal replication initiator protein DnaA, found in Oenococcus oeni (strain ATCC BAA-331 / PSU-1).